Consider the following 104-residue polypeptide: Class I hydrophobin 4 (104 aa).

The N-terminal stretch at 1-16 (MFASTVFVSLLAVAAA) is a signal peptide. Intrachain disulfides connect Cys26/Cys85, Cys34/Cys79, Cys35/Cys61, and Cys86/Cys99.

This sequence belongs to the fungal hydrophobin family. Self-assembles to form functional amyloid fibrils called rodlets. Self-assembly into fibrillar rodlets occurs spontaneously at hydrophobic:hydrophilic interfaces and the rodlets further associate laterally to form amphipathic monolayers.

It localises to the secreted. The protein localises to the cell wall. In terms of biological role, aerial growth, conidiation, and dispersal of filamentous fungi in the environment rely upon a capability of their secreting small amphipathic proteins called hydrophobins (HPBs) with low sequence identity. Class I can self-assemble into an outermost layer of rodlet bundles on aerial cell surfaces, conferring cellular hydrophobicity that supports fungal growth, development and dispersal; whereas Class II form highly ordered films at water-air interfaces through intermolecular interactions but contribute nothing to the rodlet structure. HYD4 is a class I hydrophobin that negatively regulates aerial mycelial growth, conidiation, carotenoid and adenosine synthesis, resistance to oxidant stress, and fruiting body development. Seems not to be involved in the mycelial growth rate, the hydrophobicity of the mycelia and conidia, nor the conidial virulence on silkworm pupae. The polypeptide is Class I hydrophobin 4 (Cordyceps militaris (Caterpillar fungus)).